A 347-amino-acid chain; its full sequence is MPDPLALAISTGEPAGIGPDITIGALLQLAGQNGHARYHVLGDAHLLASRAAALGVAHAWERRIAEGEVVIHHVPLAVACEPGRLDARNGPYVLSMLDAAIAGCRTHAGAPARFAAMVTAPVQKSTINDAGVPFTGHTEYLAEAAGVPRVVMMLAGPQPAHANAMLRVALATTHLPLRAVADAVTVPLLLETLSIIDADLRRWFGIARPRILVTGLNPHAGESGHMGREEINVIEPALAQARDAGIDARGPYPADTLFQPRHLRDADCVLAMYHDQGLAPLKYGTFGHGVNITLGLPFIRTSVDHGTALDLAGSGQAEHGSMIEAIRSAVTMAGHANGRHASARVPH.

The substrate site is built by His137 and Thr138. A divalent metal cation is bound by residues His174, His219, and His274. Residues Lys282, Asn291, and Arg300 each coordinate substrate.

Belongs to the PdxA family. In terms of assembly, homodimer. Zn(2+) is required as a cofactor. Requires Mg(2+) as cofactor. It depends on Co(2+) as a cofactor.

It localises to the cytoplasm. It carries out the reaction 4-(phosphooxy)-L-threonine + NAD(+) = 3-amino-2-oxopropyl phosphate + CO2 + NADH. It participates in cofactor biosynthesis; pyridoxine 5'-phosphate biosynthesis; pyridoxine 5'-phosphate from D-erythrose 4-phosphate: step 4/5. Functionally, catalyzes the NAD(P)-dependent oxidation of 4-(phosphooxy)-L-threonine (HTP) into 2-amino-3-oxo-4-(phosphooxy)butyric acid which spontaneously decarboxylates to form 3-amino-2-oxopropyl phosphate (AHAP). This Cupriavidus pinatubonensis (strain JMP 134 / LMG 1197) (Cupriavidus necator (strain JMP 134)) protein is 4-hydroxythreonine-4-phosphate dehydrogenase.